Here is a 285-residue protein sequence, read N- to C-terminus: Golgi phosphoprotein 3-like (285 aa).

A disordered region spans residues 1–42 (MTTLTHRARRTEISKNSEKKMESEEDSNWEKSPDNEDSGDSK). Residues 10-42 (RTEISKNSEKKMESEEDSNWEKSPDNEDSGDSK) are compositionally biased toward basic and acidic residues. 2 residues coordinate a 1,2-diacyl-sn-glycero-3-phospho-(1D-myo-inositol 4-phosphate): Trp67 and Arg76. At Ser112 the chain carries Phosphoserine. A 1,2-diacyl-sn-glycero-3-phospho-(1D-myo-inositol 4-phosphate) is bound by residues Arg157 and Arg160. A beta-hairpin required for oligomerization region spans residues 176–187 (EKQNFLLFDMTT).

Belongs to the GOLPH3/VPS74 family. As to quaternary structure, homooligomer. Does not interact MYO18; differs from GOLPH3 by its inability to interact with MYO18. May interact with ARF1.

Its subcellular location is the golgi apparatus. It is found in the golgi stack membrane. The protein resides in the trans-Golgi network membrane. Functionally, phosphatidylinositol-4-phosphate-binding protein that may antagonize the action of GOLPH3 which is required for the process of vesicle budding at the Golgi and anterograde transport to the plasma membrane. The sequence is that of Golgi phosphoprotein 3-like (GOLPH3L) from Homo sapiens (Human).